Reading from the N-terminus, the 250-residue chain is tRNA (guanine-N(1)-)-methyltransferase (250 aa).

S-adenosyl-L-methionine contacts are provided by residues Gly116 and 136–141 (IGDYVL).

It belongs to the RNA methyltransferase TrmD family. In terms of assembly, homodimer.

It is found in the cytoplasm. The catalysed reaction is guanosine(37) in tRNA + S-adenosyl-L-methionine = N(1)-methylguanosine(37) in tRNA + S-adenosyl-L-homocysteine + H(+). Functionally, specifically methylates guanosine-37 in various tRNAs. This Pseudomonas fluorescens (strain SBW25) protein is tRNA (guanine-N(1)-)-methyltransferase.